The primary structure comprises 158 residues: Trafficking protein particle complex subunit 6B (158 aa).

This sequence belongs to the TRAPP small subunits family. BET3 subfamily. Homodimer. Part of a TRAPP complex. Heterodimer with TRAPPC3. The heterodimer TRAPPC6B-TRAPPC3 interacts with TRAPPC1 likely providing a core for TRAPP complex formation. As to expression, widely expressed. Expressed in lung, heart, liver, spleen, brain and kidney.

The protein resides in the golgi apparatus. It localises to the cis-Golgi network. The protein localises to the endoplasmic reticulum. In terms of biological role, component of a transport protein particle (TRAPP) complex that may function in specific stages of inter-organelle traffic. Specifically involved in the early development of neural circuitry, likely by controlling the frequency and amplitude of intracellular calcium transients implicated in the regulation of neuron differentiation and survival. In Mus musculus (Mouse), this protein is Trafficking protein particle complex subunit 6B.